We begin with the raw amino-acid sequence, 461 residues long: D-phenylhydantoinase (461 aa).

A divalent metal cation-binding residues include His59, His61, and Lys151. Residue Lys151 is modified to N6-carboxylysine. Tyr156 is a substrate binding site. A divalent metal cation-binding residues include His182 and His239. Ser286 contacts substrate. Asp313 lines the a divalent metal cation pocket. Asn335 contributes to the substrate binding site.

This sequence belongs to the metallo-dependent hydrolases superfamily. Hydantoinase/dihydropyrimidinase family. In terms of assembly, homotetramer. The cofactor is a divalent metal cation. Post-translationally, carboxylation allows a single lysine to coordinate two divalent metal cations.

It carries out the reaction D-5-phenylhydantoin + H2O = N-carbamoyl-D-phenylglycine + H(+). In terms of biological role, catalyzes the stereospecific hydrolysis of the cyclic amide bond of D-hydantoin derivatives with an aromatic side chains at the 5'-position. Has no activity on dihydropyrimidines. The physiological function is unknown. The protein is D-phenylhydantoinase of Shigella boydii serotype 4 (strain Sb227).